Reading from the N-terminus, the 370-residue chain is Dual-specificity RNA methyltransferase RlmN (370 aa).

Glu97 (proton acceptor) is an active-site residue. The region spanning 103-340 is the Radical SAM core domain; that stretch reads EKSRGTLCIS…CTVRRTRGDD (238 aa). Cys110 and Cys345 form a disulfide bridge. Positions 117, 121, and 124 each coordinate [4Fe-4S] cluster. S-adenosyl-L-methionine-binding positions include 170 to 171, Ser202, 224 to 226, and Asn302; these read GE and SLH. The S-methylcysteine intermediate role is filled by Cys345.

Belongs to the radical SAM superfamily. RlmN family. It depends on [4Fe-4S] cluster as a cofactor.

The protein localises to the cytoplasm. It carries out the reaction adenosine(2503) in 23S rRNA + 2 reduced [2Fe-2S]-[ferredoxin] + 2 S-adenosyl-L-methionine = 2-methyladenosine(2503) in 23S rRNA + 5'-deoxyadenosine + L-methionine + 2 oxidized [2Fe-2S]-[ferredoxin] + S-adenosyl-L-homocysteine. The enzyme catalyses adenosine(37) in tRNA + 2 reduced [2Fe-2S]-[ferredoxin] + 2 S-adenosyl-L-methionine = 2-methyladenosine(37) in tRNA + 5'-deoxyadenosine + L-methionine + 2 oxidized [2Fe-2S]-[ferredoxin] + S-adenosyl-L-homocysteine. In terms of biological role, specifically methylates position 2 of adenine 2503 in 23S rRNA and position 2 of adenine 37 in tRNAs. m2A2503 modification seems to play a crucial role in the proofreading step occurring at the peptidyl transferase center and thus would serve to optimize ribosomal fidelity. This Hydrogenovibrio crunogenus (strain DSM 25203 / XCL-2) (Thiomicrospira crunogena) protein is Dual-specificity RNA methyltransferase RlmN.